The sequence spans 190 residues: uncharacterized protein (190 aa).

The N-terminal stretch at 1 to 15 (MKVFAYIALATVVAG) is a signal peptide.

It localises to the secreted. This is an uncharacterized protein from Arthroderma benhamiae (strain ATCC MYA-4681 / CBS 112371) (Trichophyton mentagrophytes).